The following is a 141-amino-acid chain: Transcription antitermination protein NusB (141 aa).

It belongs to the NusB family.

Involved in transcription antitermination. Required for transcription of ribosomal RNA (rRNA) genes. Binds specifically to the boxA antiterminator sequence of the ribosomal RNA (rrn) operons. In Treponema pallidum (strain Nichols), this protein is Transcription antitermination protein NusB.